We begin with the raw amino-acid sequence, 183 residues long: Ion-translocating oxidoreductase complex subunit B (183 aa).

A hydrophobic region spans residues 1 to 23 (MLSALLVMAAIAVVLGAALGFAA). Residues 29-88 (EGDPLVDKIDAILPQTQCGQCGYPGCKPYAQAIAQGEADINQCPPGGEEGVRKLADLLGR) enclose the 4Fe-4S domain. [4Fe-4S] cluster contacts are provided by cysteine 46, cysteine 49, cysteine 54, cysteine 71, cysteine 113, cysteine 116, cysteine 119, cysteine 123, cysteine 143, cysteine 146, cysteine 149, and cysteine 153. 2 4Fe-4S ferredoxin-type domains span residues 104-133 (AVAYIDENVCIGCTLCLQACPVDAIVGAAK) and 135-163 (MHTVVDPLCTGCELCVAPCPVDCIYMEPV).

The protein belongs to the 4Fe4S bacterial-type ferredoxin family. RnfB subfamily. As to quaternary structure, the complex is composed of six subunits: RnfA, RnfB, RnfC, RnfD, RnfE and RnfG. It depends on [4Fe-4S] cluster as a cofactor.

Its subcellular location is the cell inner membrane. Its function is as follows. Part of a membrane-bound complex that couples electron transfer with translocation of ions across the membrane. This is Ion-translocating oxidoreductase complex subunit B from Azoarcus sp. (strain BH72).